The following is a 150-amino-acid chain: D-aminoacyl-tRNA deacylase (150 aa).

The short motif at 136 to 137 is the Gly-cisPro motif, important for rejection of L-amino acids element; it reads GP.

The protein belongs to the DTD family. Homodimer.

Its subcellular location is the cytoplasm. The enzyme catalyses glycyl-tRNA(Ala) + H2O = tRNA(Ala) + glycine + H(+). The catalysed reaction is a D-aminoacyl-tRNA + H2O = a tRNA + a D-alpha-amino acid + H(+). In terms of biological role, an aminoacyl-tRNA editing enzyme that deacylates mischarged D-aminoacyl-tRNAs. Also deacylates mischarged glycyl-tRNA(Ala), protecting cells against glycine mischarging by AlaRS. Acts via tRNA-based rather than protein-based catalysis; rejects L-amino acids rather than detecting D-amino acids in the active site. By recycling D-aminoacyl-tRNA to D-amino acids and free tRNA molecules, this enzyme counteracts the toxicity associated with the formation of D-aminoacyl-tRNA entities in vivo and helps enforce protein L-homochirality. The polypeptide is D-aminoacyl-tRNA deacylase (Staphylococcus saprophyticus subsp. saprophyticus (strain ATCC 15305 / DSM 20229 / NCIMB 8711 / NCTC 7292 / S-41)).